The primary structure comprises 564 residues: Proline--tRNA ligase 1 (564 aa).

It belongs to the class-II aminoacyl-tRNA synthetase family. ProS type 1 subfamily. As to quaternary structure, homodimer.

The protein resides in the cytoplasm. The enzyme catalyses tRNA(Pro) + L-proline + ATP = L-prolyl-tRNA(Pro) + AMP + diphosphate. Functionally, catalyzes the attachment of proline to tRNA(Pro) in a two-step reaction: proline is first activated by ATP to form Pro-AMP and then transferred to the acceptor end of tRNA(Pro). As ProRS can inadvertently accommodate and process non-cognate amino acids such as alanine and cysteine, to avoid such errors it has two additional distinct editing activities against alanine. One activity is designated as 'pretransfer' editing and involves the tRNA(Pro)-independent hydrolysis of activated Ala-AMP. The other activity is designated 'posttransfer' editing and involves deacylation of mischarged Ala-tRNA(Pro). The misacylated Cys-tRNA(Pro) is not edited by ProRS. The chain is Proline--tRNA ligase 1 from Streptomyces avermitilis (strain ATCC 31267 / DSM 46492 / JCM 5070 / NBRC 14893 / NCIMB 12804 / NRRL 8165 / MA-4680).